The following is a 906-amino-acid chain: Translation initiation factor IF-2 (906 aa).

Disordered regions lie at residues 134–250 (RQRN…GSHV) and 269–317 (HLSA…FERP). The span at 136 to 177 (RNLDEQQRLAESDRVRDEEIQRKRDEEQAAKDRAEAERKAAE) shows a compositional bias: basic and acidic residues. 2 stretches are compositionally biased toward low complexity: residues 178–232 (EAAA…STPA) and 287–305 (GRPG…RGSN). The 170-residue stretch at 405-574 (TRPPVVTIMG…SLQAEVLELK (170 aa)) folds into the tr-type G domain. A G1 region spans residues 414–421 (GHVDHGKT). 414–421 (GHVDHGKT) is a GTP binding site. The tract at residues 439–443 (GITQH) is G2. Residues 460–463 (DTPG) form a G3 region. GTP contacts are provided by residues 460–464 (DTPGH) and 514–517 (NKID). The G4 stretch occupies residues 514–517 (NKID). Positions 550–552 (SAK) are G5.

It belongs to the TRAFAC class translation factor GTPase superfamily. Classic translation factor GTPase family. IF-2 subfamily.

The protein resides in the cytoplasm. Functionally, one of the essential components for the initiation of protein synthesis. Protects formylmethionyl-tRNA from spontaneous hydrolysis and promotes its binding to the 30S ribosomal subunits. Also involved in the hydrolysis of GTP during the formation of the 70S ribosomal complex. This is Translation initiation factor IF-2 from Xanthomonas oryzae pv. oryzae (strain MAFF 311018).